Consider the following 540-residue polypeptide: Chaperonin GroEL 3 (540 aa).

ATP contacts are provided by residues 30–33, lysine 51, 87–91, glycine 415, 480–482, and aspartate 496; these read TLGP, DGTTT, and NAA.

It belongs to the chaperonin (HSP60) family. As to quaternary structure, forms a cylinder of 14 subunits composed of two heptameric rings stacked back-to-back. Interacts with the co-chaperonin GroES.

It is found in the cytoplasm. The catalysed reaction is ATP + H2O + a folded polypeptide = ADP + phosphate + an unfolded polypeptide.. Together with its co-chaperonin GroES, plays an essential role in assisting protein folding. The GroEL-GroES system forms a nano-cage that allows encapsulation of the non-native substrate proteins and provides a physical environment optimized to promote and accelerate protein folding. The chain is Chaperonin GroEL 3 from Bradyrhizobium sp. (strain BTAi1 / ATCC BAA-1182).